A 1064-amino-acid polypeptide reads, in one-letter code: Error-prone DNA polymerase (1064 aa).

This sequence belongs to the DNA polymerase type-C family. DnaE2 subfamily.

Its subcellular location is the cytoplasm. It carries out the reaction DNA(n) + a 2'-deoxyribonucleoside 5'-triphosphate = DNA(n+1) + diphosphate. Functionally, DNA polymerase involved in damage-induced mutagenesis and translesion synthesis (TLS). It is not the major replicative DNA polymerase. This Azoarcus sp. (strain BH72) protein is Error-prone DNA polymerase.